The sequence spans 594 residues: Homeobox protein prospero homolog 1 (594 aa).

Composition is skewed to polar residues over residues 1–13 and 36–50; these read MSSG…ATAQ and PPVN…SSNR. Disordered stretches follow at residues 1–20, 30–180, and 358–389; these read MSSG…NGFS, IYYS…FQPQ, and DTSS…SASA. Over residues 73–101 the composition is skewed to low complexity; that stretch reads STSVSSNSSSSSSTSNTNSTPSSSSTSSK. Over residues 105–117 the composition is skewed to polar residues; that stretch reads EGMTETETMTASI. Positions 118–135 are enriched in basic and acidic residues; sequence EQEKVIQNEESEAGKDGM. The segment covering 136-162 has biased composition (acidic residues); the sequence is EEHDDGMNDFEIIDDTNDEVEESEERE. Positions 369–378 are enriched in basic and acidic residues; it reads KVEIKKEDAM. Positions 379-389 are enriched in low complexity; that stretch reads SSRASPLSASA. Residues 435–493 form the Prospero-type homeo domain; the sequence is SSMLTPMHLRKAKLMFFYTRYPNSNLLKSYFPDIRFNKNNTAQLVKWFSNFREFYYNQM. A homeo-Prospero region spans residues 435–593; that stretch reads SSMLTPMHLR…KEPNFLERLE (159 aa). In terms of domain architecture, Prospero spans 494-593; the sequence is EKFARQALAE…KEPNFLERLE (100 aa).

The protein belongs to the Prospero homeodomain family.

Its subcellular location is the nucleus. Its function is as follows. Transcription factor involved in developmental processes. Controls the transcription of genes required for excretory canal formation. This is Homeobox protein prospero homolog 1 from Caenorhabditis elegans.